We begin with the raw amino-acid sequence, 371 residues long: Queuine tRNA-ribosyltransferase (371 aa).

Aspartate 90 functions as the Proton acceptor in the catalytic mechanism. Substrate-binding positions include 90–94 (DSGGF), aspartate 144, glutamine 188, and glycine 215. The tract at residues 246–252 (GVGTPED) is RNA binding. Aspartate 265 acts as the Nucleophile in catalysis. An RNA binding; important for wobble base 34 recognition region spans residues 270–274 (TRNAR). Zn(2+) is bound by residues cysteine 303, cysteine 305, cysteine 308, and histidine 334.

The protein belongs to the queuine tRNA-ribosyltransferase family. In terms of assembly, homodimer. Within each dimer, one monomer is responsible for RNA recognition and catalysis, while the other monomer binds to the replacement base PreQ1. It depends on Zn(2+) as a cofactor.

The enzyme catalyses 7-aminomethyl-7-carbaguanine + guanosine(34) in tRNA = 7-aminomethyl-7-carbaguanosine(34) in tRNA + guanine. It functions in the pathway tRNA modification; tRNA-queuosine biosynthesis. Its function is as follows. Catalyzes the base-exchange of a guanine (G) residue with the queuine precursor 7-aminomethyl-7-deazaguanine (PreQ1) at position 34 (anticodon wobble position) in tRNAs with GU(N) anticodons (tRNA-Asp, -Asn, -His and -Tyr). Catalysis occurs through a double-displacement mechanism. The nucleophile active site attacks the C1' of nucleotide 34 to detach the guanine base from the RNA, forming a covalent enzyme-RNA intermediate. The proton acceptor active site deprotonates the incoming PreQ1, allowing a nucleophilic attack on the C1' of the ribose to form the product. After dissociation, two additional enzymatic reactions on the tRNA convert PreQ1 to queuine (Q), resulting in the hypermodified nucleoside queuosine (7-(((4,5-cis-dihydroxy-2-cyclopenten-1-yl)amino)methyl)-7-deazaguanosine). In Neisseria gonorrhoeae (strain NCCP11945), this protein is Queuine tRNA-ribosyltransferase.